The primary structure comprises 62 residues: Large ribosomal subunit protein bL32 (62 aa).

The segment covering 1–16 (MAVPKRKTSPMKRGFR) has biased composition (basic residues). The tract at residues 1 to 62 (MAVPKRKTSP…QILTPKNKEA (62 aa)) is disordered. Residues 28–44 (VEDKDSGELRRPHHVDL) show a composition bias toward basic and acidic residues.

Belongs to the bacterial ribosomal protein bL32 family.

The protein is Large ribosomal subunit protein bL32 of Methylocella silvestris (strain DSM 15510 / CIP 108128 / LMG 27833 / NCIMB 13906 / BL2).